The primary structure comprises 485 residues: Glutamyl-tRNA(Gln) amidotransferase subunit A (485 aa).

Catalysis depends on charge relay system residues Lys76 and Ser151. Ser175 functions as the Acyl-ester intermediate in the catalytic mechanism.

This sequence belongs to the amidase family. GatA subfamily. As to quaternary structure, heterotrimer of A, B and C subunits.

It carries out the reaction L-glutamyl-tRNA(Gln) + L-glutamine + ATP + H2O = L-glutaminyl-tRNA(Gln) + L-glutamate + ADP + phosphate + H(+). Functionally, allows the formation of correctly charged Gln-tRNA(Gln) through the transamidation of misacylated Glu-tRNA(Gln) in organisms which lack glutaminyl-tRNA synthetase. The reaction takes place in the presence of glutamine and ATP through an activated gamma-phospho-Glu-tRNA(Gln). The polypeptide is Glutamyl-tRNA(Gln) amidotransferase subunit A (Methylococcus capsulatus (strain ATCC 33009 / NCIMB 11132 / Bath)).